A 69-amino-acid polypeptide reads, in one-letter code: MSRSTFLTLQEGLRRINQPRLLAESSRRRQRLLSLREKANLRKLGWWLKLPLVLQPLNGQPPMKKMIYQ.

This is an uncharacterized protein from Homo sapiens (Human).